We begin with the raw amino-acid sequence, 102 residues long: Urease subunit beta (102 aa).

It belongs to the urease beta subunit family. As to quaternary structure, heterotrimer of UreA (gamma), UreB (beta) and UreC (alpha) subunits. Three heterotrimers associate to form the active enzyme.

The protein resides in the cytoplasm. The catalysed reaction is urea + 2 H2O + H(+) = hydrogencarbonate + 2 NH4(+). It participates in nitrogen metabolism; urea degradation; CO(2) and NH(3) from urea (urease route): step 1/1. This chain is Urease subunit beta, found in Methylobacillus flagellatus (strain ATCC 51484 / DSM 6875 / VKM B-1610 / KT).